The following is an 89-amino-acid chain: Small ribosomal subunit protein uS19 (89 aa).

It belongs to the universal ribosomal protein uS19 family.

In terms of biological role, protein S19 forms a complex with S13 that binds strongly to the 16S ribosomal RNA. The protein is Small ribosomal subunit protein uS19 of Azobacteroides pseudotrichonymphae genomovar. CFP2.